The chain runs to 346 residues: Phosphoribosylformylglycinamidine cyclo-ligase (346 aa).

This sequence belongs to the AIR synthase family.

It localises to the cytoplasm. It carries out the reaction 2-formamido-N(1)-(5-O-phospho-beta-D-ribosyl)acetamidine + ATP = 5-amino-1-(5-phospho-beta-D-ribosyl)imidazole + ADP + phosphate + H(+). Its pathway is purine metabolism; IMP biosynthesis via de novo pathway; 5-amino-1-(5-phospho-D-ribosyl)imidazole from N(2)-formyl-N(1)-(5-phospho-D-ribosyl)glycinamide: step 2/2. The protein is Phosphoribosylformylglycinamidine cyclo-ligase of Prochlorococcus marinus (strain NATL2A).